The following is a 465-amino-acid chain: Solute carrier family 7 member 12 (465 aa).

Topologically, residues Met-1–Ala-6 are cytoplasmic. Residues Leu-7–Val-27 traverse the membrane as a helical segment. Over Thr-28 to Asn-39 the chain is Extracellular. The helical transmembrane segment at Ile-40–Cys-60 threads the bilayer. The Cytoplasmic portion of the chain corresponds to Asn-61–Thr-81. Residues Leu-82–Ile-102 traverse the membrane as a helical segment. The Extracellular portion of the chain corresponds to Gly-103 to Ala-132. A helical membrane pass occupies residues Leu-133–Phe-153. A topological domain (cytoplasmic) is located at residue Asn-154. The helical transmembrane segment at Thr-155 to Val-175 threads the bilayer. The Extracellular segment spans residues Asn-176–Ala-202. Residues Ile-203–Ile-223 form a helical membrane-spanning segment. The Cytoplasmic portion of the chain corresponds to Lys-224–Leu-234. A helical transmembrane segment spans residues Ile-235–Val-255. Topologically, residues Leu-256–Gln-280 are extracellular. The chain crosses the membrane as a helical span at residues Trp-281 to Ser-301. Residues Ala-302–Ser-327 are Cytoplasmic-facing. A helical membrane pass occupies residues Pro-328–Leu-351. Residues Val-352 to Ser-356 are Extracellular-facing. The helical transmembrane segment at Leu-357–Tyr-375 threads the bilayer. Residues Gln-376 to Val-386 are Cytoplasmic-facing. Residues Trp-387–Ile-407 traverse the membrane as a helical segment. At Gln-408–Ser-409 the chain is on the extracellular side. A helical transmembrane segment spans residues Pro-410–Leu-430. At Gln-431–Asn-465 the chain is on the cytoplasmic side.

The protein belongs to the amino acid-polyamine-organocation (APC) superfamily. In terms of assembly, probably forms multimers, perhaps with an unknown protein(s). In terms of tissue distribution, expressed in kidney and red blood cells (at protein level). Expressed in kidney along the collecting ducts in the cortex, outer and inner medulla. May be expressed in placenta, lungs, spleen and skeletal muscles.

It localises to the apical cell membrane. The protein resides in the basal cell membrane. The protein localises to the cytoplasm. Functionally, probably mediates sodium- and chloride-independent uptake of neutral amino acids. This is Solute carrier family 7 member 12 from Mus musculus (Mouse).